Here is a 347-residue protein sequence, read N- to C-terminus: Phenylalanine--tRNA ligase alpha subunit (347 aa).

Glutamate 261 contacts Mg(2+).

The protein belongs to the class-II aminoacyl-tRNA synthetase family. Phe-tRNA synthetase alpha subunit type 1 subfamily. As to quaternary structure, tetramer of two alpha and two beta subunits. It depends on Mg(2+) as a cofactor.

It is found in the cytoplasm. It catalyses the reaction tRNA(Phe) + L-phenylalanine + ATP = L-phenylalanyl-tRNA(Phe) + AMP + diphosphate + H(+). This chain is Phenylalanine--tRNA ligase alpha subunit, found in Streptococcus uberis (strain ATCC BAA-854 / 0140J).